The chain runs to 833 residues: Leucine--tRNA ligase (833 aa).

A 'HIGH' region motif is present at residues 41-52 (PYPSGAGLHVGH). Residues 610-614 (KMSKS) carry the 'KMSKS' region motif. Lys613 serves as a coordination point for ATP.

It belongs to the class-I aminoacyl-tRNA synthetase family.

The protein localises to the cytoplasm. It catalyses the reaction tRNA(Leu) + L-leucine + ATP = L-leucyl-tRNA(Leu) + AMP + diphosphate. This is Leucine--tRNA ligase from Streptococcus gordonii (strain Challis / ATCC 35105 / BCRC 15272 / CH1 / DL1 / V288).